A 1053-amino-acid polypeptide reads, in one-letter code: MERSEPLAVLSCEEASCSSWGACGASKNLPTMTTESLEIDDGLYSRQRYVLGDTAMQKMAKSCVFLSGMGGLGVEIAKNLVLAGIKALTIHDTKKCQAWDLGTNFFLCEDDVVNERNRAEAVLHRIAELNPYVQVSSSSAPLDETTDLSFLEKYQCVVLTEIKLTLQKKINNFCHSHCPPIKFISADVHGIWSRLFCDFGDEFEVSDTTGEEPKEIFISNITQANPGIVTCLESHPHKLETGQFLTFREIHGMTGLNGSVQQITVISPFSFSIGDTTKLDPYLHGGIAVQVKTPKTFCFEPLESQIKHPRCLIADFSKPEAPLEIHLAMLALDQFQENYNRKPNIRCQQDSDELLKLTVSINETLEEKPEVNADIVHWLSWTAQGFLPPLAAAVGGVASQEVLKAVTGKFSPLCQWLYLEAADTVESLGNPGHEEFLPRGDRYDAIRACIGNTLCQKLQNLNIFLVGCGAIGCEMLKNFALLGVGTGREKGMVTVTDPDLIEKSNLNRQFLFRPHHIQKPKSYTAAEATLKINPQLKIDAHLNKVCPATESIYSDEFYTKQDIIITALDNVEARRYVDSRCLANLRPLLDSGTMGTKGHTEIIVPQLTESYNSHRDPPEEEIPFCTLKSFPAAIEHTIQWARDKFESSFSHKPSLFNKFWQAYPSAEDVLQKIQNGQSLEGCFQVIKLLSRRPRIWSQCVELARLKFEKYFNHKALQLLHCFPLETRLKDGSLFWQSPKRPPSPIKFDLNEPLHLSFLQSAAKLYATVYCIPFSEKDLSVNSLMDILSEVKIEEFKPSNKVVQTDETARKPDHVPVSSEDERNAVFQLEEALSSNKATKSDLQMTVLSFEKDDDRNGHIDFITAASNLRAKMYSIEPADRFKTKRIAGKIIPAIATSTAAVSGLVALEMIKVAGGYPFDAYKNCFLNLAIPIIVFTETSEVRKTEIRNGISFTIWDRWTVHGKEDFTLSDFINAVKENYGIEPTMVVQGVKMLYVPVMPGHAKRLKLTMHKLVKPSTEKKYVDLTVSFAPDADGDEDLPGPPVRYYFSHDTNE.

An N-acetylmethionine modification is found at Met-1. Arg-46 contributes to the ATP binding site. The residue at position 54 (Thr-54) is a Phosphothreonine. Ala-470 and Asp-497 together coordinate ATP. The Mg(2+) site is built by Asp-499 and Glu-502. Asn-505, Arg-508, Gln-509, and Lys-521 together coordinate ATP. Lys-544 carries the post-translational modification N6-acetyllysine. Val-545 serves as a coordination point for ATP. Mg(2+) is bound at residue Asp-569. Asn-570 serves as a coordination point for ATP. The active-site Glycyl thioester intermediate is Cys-625. Residue Lys-729 is modified to N6-acetyllysine. Position 737 is a phosphoserine (Ser-737).

This sequence belongs to the ubiquitin-activating E1 family. As to quaternary structure, forms a thioester with UBD in cells stimulated with tumor necrosis factor-alpha (TNFa) and interferon-gamma (IFNg).

The enzyme catalyses ATP + ubiquitin + [E1 ubiquitin-activating enzyme]-L-cysteine = AMP + diphosphate + S-ubiquitinyl-[E1 ubiquitin-activating enzyme]-L-cysteine.. The protein operates within protein modification; protein ubiquitination. In terms of biological role, activates ubiquitin by first adenylating its C-terminal glycine residue with ATP, and thereafter linking this residue to the side chain of a cysteine residue in E1, yielding a ubiquitin-E1 thioester and free AMP. Specific for ubiquitin, does not activate ubiquitin-like peptides. Also activates UBD/FAT10 conjugation via adenylation of its C-terminal glycine. Differs from UBE1 in its specificity for substrate E2 charging. Does not charge cell cycle E2s, such as CDC34. Essential for embryonic development. The sequence is that of Ubiquitin-like modifier-activating enzyme 6 (Uba6) from Mus musculus (Mouse).